We begin with the raw amino-acid sequence, 378 residues long: Calponin homolog OV9M (378 aa).

Low complexity predominate over residues 1–20 (MPAQPAQENAQDADDAQANA). The interval 1-35 (MPAQPAQENAQDADDAQANATMETRVAGQGQPKRV) is disordered. 7 Calponin-like repeats span residues 50–75 (IPSQ…RNTQ), 98–123 (VRLQ…RDVC), 151–176 (VRLQ…RRET), 197–222 (IPLQ…RRET), 244–269 (IPSQ…RWEV), 285–310 (VRLQ…RNTT), and 330–355 (IPSQ…RDVK). Residues 175–194 (ETTKMTDSKHPDYDHERPDQ) form a disordered region. The interval 230–256 (HPEYDPESSIDSSTIPSQMGSNKYASQ) is disordered. Polar residues predominate over residues 238–256 (SIDSSTIPSQMGSNKYASQ). Residues 331–352 (PSQAGWNRGDSQKGMTGFGAPR) are disordered.

It belongs to the calponin family. As to expression, found in the longitudinal muscles below the hypodermis.

Functionally, could be involved in muscle contraction. In Onchocerca volvulus, this protein is Calponin homolog OV9M.